Reading from the N-terminus, the 339-residue chain is Anthranilate phosphoribosyltransferase (339 aa).

Residues glycine 80, 83–84 (GD), threonine 88, 90–93 (NIST), 108–116 (KHGNRSVSS), and serine 120 each bind 5-phospho-alpha-D-ribose 1-diphosphate. Glycine 80 contributes to the anthranilate binding site. Residue serine 92 participates in Mg(2+) binding. Residue asparagine 111 participates in anthranilate binding. Arginine 166 is an anthranilate binding site. Residues aspartate 225 and glutamate 226 each contribute to the Mg(2+) site.

It belongs to the anthranilate phosphoribosyltransferase family. In terms of assembly, homodimer. Requires Mg(2+) as cofactor.

The catalysed reaction is N-(5-phospho-beta-D-ribosyl)anthranilate + diphosphate = 5-phospho-alpha-D-ribose 1-diphosphate + anthranilate. It participates in amino-acid biosynthesis; L-tryptophan biosynthesis; L-tryptophan from chorismate: step 2/5. Functionally, catalyzes the transfer of the phosphoribosyl group of 5-phosphorylribose-1-pyrophosphate (PRPP) to anthranilate to yield N-(5'-phosphoribosyl)-anthranilate (PRA). In Alkaliphilus metalliredigens (strain QYMF), this protein is Anthranilate phosphoribosyltransferase.